Consider the following 240-residue polypeptide: Fatty acid metabolism regulator protein (240 aa).

Positions 6-74 constitute an HTH gntR-type domain; the sequence is KGPASFAEKY…HGKPTRVNNF (69 aa). A DNA-binding region (H-T-H motif) is located at residues 34–53; it reads ERELSELIGVTRTTLREVLQ.

As to quaternary structure, homodimer.

It localises to the cytoplasm. In terms of biological role, multifunctional regulator of fatty acid metabolism. The sequence is that of Fatty acid metabolism regulator protein from Shewanella amazonensis (strain ATCC BAA-1098 / SB2B).